We begin with the raw amino-acid sequence, 200 residues long: Phospholipase A2 inhibitor NAI (200 aa).

A signal peptide spans 1-19 (MKSLLFCCLFGTFLATGMC). 8 cysteine pairs are disulfide-bonded: Cys22–Cys46, Cys25–Cys32, Cys39–Cys67, Cys73–Cys94, Cys95–Cys100, Cys120–Cys145, Cys138–Cys165, and Cys171–Cys191.

Belongs to the CNF-like-inhibitor family. Heterotrimer of 2 subunits A and 1 subunit B; non-covalently linked. In terms of tissue distribution, expressed by the liver.

Its subcellular location is the secreted. Inhibits the enzymatic activity of all phospholipase A2 tested, binding with micromole to nanomole affinity. The chain is Phospholipase A2 inhibitor NAI from Notechis ater (Black tiger snake).